The sequence spans 571 residues: Putative phospholipase B-like 1 (571 aa).

The signal sequence occupies residues 1–18 (MNWIFIFLAAAVAIGCEA). Asn-62, Asn-149, Asn-442, and Asn-473 each carry an N-linked (GlcNAc...) asparagine glycan.

This sequence belongs to the phospholipase B-like family.

Its subcellular location is the lysosome. Its function is as follows. Putative phospholipase. The sequence is that of Putative phospholipase B-like 1 from Caenorhabditis elegans.